Consider the following 135-residue polypeptide: Large-conductance mechanosensitive channel (135 aa).

Helical transmembrane passes span 9-29 (AFAA…GAAF) and 79-99 (IQTI…LKAI).

It belongs to the MscL family. As to quaternary structure, homopentamer.

The protein localises to the cell inner membrane. Channel that opens in response to stretch forces in the membrane lipid bilayer. May participate in the regulation of osmotic pressure changes within the cell. The polypeptide is Large-conductance mechanosensitive channel (Aeromonas salmonicida (strain A449)).